The primary structure comprises 328 residues: Arabinose 5-phosphate isomerase KdsD (328 aa).

The 143-residue stretch at 42-184 (CEKMFWCKGK…AVALLKARGF (143 aa)) folds into the SIS domain. Substrate is bound by residues 75 to 76 (GT), H82, H88, 114 to 123 (ALIPVLKRLH), 148 to 150 (KVA), T222, and D275. Residue H82 participates in Zn(2+) binding. One can recognise a CBS 1 domain in the interval 210–268 (MHTGDEIPHVKKTASLRDALLEVTRKNLGMTVICDDNMMIEGIFTDGDLRRVFDMGVDV). Residues 277–328 (MTPGGIRVRPGILAVEALNLMQSRHITSVMVADGDHLLGVLHMHDLLRAGVV) enclose the CBS 2 domain.

Belongs to the SIS family. GutQ/KpsF subfamily. As to quaternary structure, homotetramer.

The enzyme catalyses D-arabinose 5-phosphate = D-ribulose 5-phosphate. It participates in carbohydrate biosynthesis; 3-deoxy-D-manno-octulosonate biosynthesis; 3-deoxy-D-manno-octulosonate from D-ribulose 5-phosphate: step 1/3. The protein operates within bacterial outer membrane biogenesis; lipopolysaccharide biosynthesis. Functionally, involved in the biosynthesis of 3-deoxy-D-manno-octulosonate (KDO), a unique 8-carbon sugar component of lipopolysaccharides (LPSs). Catalyzes the reversible aldol-ketol isomerization between D-ribulose 5-phosphate (Ru5P) and D-arabinose 5-phosphate (A5P). In Escherichia coli O157:H7, this protein is Arabinose 5-phosphate isomerase KdsD (kdsD).